We begin with the raw amino-acid sequence, 143 residues long: Deoxyuridine 5'-triphosphate nucleotidohydrolase (143 aa).

Substrate is bound by residues 63–65 (RSG), Asn76, 80–82 (TID), and Lys90.

Belongs to the dUTPase family. It depends on Mg(2+) as a cofactor.

The enzyme catalyses dUTP + H2O = dUMP + diphosphate + H(+). The protein operates within pyrimidine metabolism; dUMP biosynthesis; dUMP from dCTP (dUTP route): step 2/2. In terms of biological role, this enzyme is involved in nucleotide metabolism: it produces dUMP, the immediate precursor of thymidine nucleotides and it decreases the intracellular concentration of dUTP so that uracil cannot be incorporated into DNA. In Clostridioides difficile (Peptoclostridium difficile), this protein is Deoxyuridine 5'-triphosphate nucleotidohydrolase.